A 339-amino-acid chain; its full sequence is Phenylalanine--tRNA ligase alpha subunit (339 aa).

Mg(2+) is bound at residue glutamate 247.

It belongs to the class-II aminoacyl-tRNA synthetase family. Phe-tRNA synthetase alpha subunit type 1 subfamily. Tetramer of two alpha and two beta subunits. Mg(2+) is required as a cofactor.

The protein localises to the cytoplasm. It catalyses the reaction tRNA(Phe) + L-phenylalanine + ATP = L-phenylalanyl-tRNA(Phe) + AMP + diphosphate + H(+). The protein is Phenylalanine--tRNA ligase alpha subunit (pheS) of Deinococcus radiodurans (strain ATCC 13939 / DSM 20539 / JCM 16871 / CCUG 27074 / LMG 4051 / NBRC 15346 / NCIMB 9279 / VKM B-1422 / R1).